The chain runs to 191 residues: NAD(P)H dehydrogenase (quinone) (191 aa).

One can recognise a Flavodoxin-like domain in the interval 4–184 (ILVIFHSITG…VAKMLGKRVA (181 aa)). FMN contacts are provided by residues 10–15 (SITGNT), 83–85 (TRF), and 118–124 (SNEMPHG).

This sequence belongs to the WrbA family. As to quaternary structure, homodimer and homotetramer; in equilibrium. Requires FMN as cofactor.

It catalyses the reaction a quinone + NADH + H(+) = a quinol + NAD(+). The enzyme catalyses a quinone + NADPH + H(+) = a quinol + NADP(+). Its function is as follows. It seems to function in response to environmental stress when various electron transfer chains are affected or when the environment is highly oxidizing. It reduces quinones to the hydroquinone state to prevent interaction of the semiquinone with O2 and production of superoxide. It prefers NADH over NADPH. The protein is NAD(P)H dehydrogenase (quinone) of Archaeoglobus fulgidus (strain ATCC 49558 / DSM 4304 / JCM 9628 / NBRC 100126 / VC-16).